The following is a 161-amino-acid chain: Transcription elongation factor GreA (161 aa).

The stretch at Ala46–Leu71 forms a coiled coil.

This sequence belongs to the GreA/GreB family.

Its function is as follows. Necessary for efficient RNA polymerase transcription elongation past template-encoded arresting sites. The arresting sites in DNA have the property of trapping a certain fraction of elongating RNA polymerases that pass through, resulting in locked ternary complexes. Cleavage of the nascent transcript by cleavage factors such as GreA or GreB allows the resumption of elongation from the new 3'terminus. GreA releases sequences of 2 to 3 nucleotides. The sequence is that of Transcription elongation factor GreA from Syntrophus aciditrophicus (strain SB).